Consider the following 261-residue polypeptide: Adenosylcobinamide-GDP ribazoletransferase (261 aa).

Transmembrane regions (helical) follow at residues 31-51 (YAIC…FLTF), 59-79 (LGDI…SGGI), 125-145 (FGMV…FFVV), 183-203 (VIYL…LTVV), and 240-260 (LMAG…TGHW).

Belongs to the CobS family. Mg(2+) is required as a cofactor.

It is found in the cell membrane. The enzyme catalyses alpha-ribazole + adenosylcob(III)inamide-GDP = adenosylcob(III)alamin + GMP + H(+). It carries out the reaction alpha-ribazole 5'-phosphate + adenosylcob(III)inamide-GDP = adenosylcob(III)alamin 5'-phosphate + GMP + H(+). Its pathway is cofactor biosynthesis; adenosylcobalamin biosynthesis; adenosylcobalamin from cob(II)yrinate a,c-diamide: step 7/7. In terms of biological role, joins adenosylcobinamide-GDP and alpha-ribazole to generate adenosylcobalamin (Ado-cobalamin). Also synthesizes adenosylcobalamin 5'-phosphate from adenosylcobinamide-GDP and alpha-ribazole 5'-phosphate. This is Adenosylcobinamide-GDP ribazoletransferase from Lachnoclostridium phytofermentans (strain ATCC 700394 / DSM 18823 / ISDg) (Clostridium phytofermentans).